The primary structure comprises 218 residues: uncharacterized protein (218 aa).

This is an uncharacterized protein from Methanocaldococcus jannaschii (strain ATCC 43067 / DSM 2661 / JAL-1 / JCM 10045 / NBRC 100440) (Methanococcus jannaschii).